A 157-amino-acid polypeptide reads, in one-letter code: Urease accessory protein UreE (157 aa).

The protein belongs to the UreE family.

It localises to the cytoplasm. Its function is as follows. Involved in urease metallocenter assembly. Binds nickel. Probably functions as a nickel donor during metallocenter assembly. The chain is Urease accessory protein UreE from Corynebacterium glutamicum (strain ATCC 13032 / DSM 20300 / JCM 1318 / BCRC 11384 / CCUG 27702 / LMG 3730 / NBRC 12168 / NCIMB 10025 / NRRL B-2784 / 534).